The sequence spans 384 residues: tRNA-specific 2-thiouridylase MnmA (384 aa).

ATP is bound by residues 9-16 and Met35; that span reads GMSGGVDS. The interval 95 to 97 is interaction with target base in tRNA; that stretch reads NPD. The active-site Nucleophile is the Cys100. A disulfide bond links Cys100 and Cys196. Gly124 contributes to the ATP binding site. The tract at residues 146–148 is interaction with tRNA; sequence KDQ. The Cysteine persulfide intermediate role is filled by Cys196. The interval 308–309 is interaction with tRNA; the sequence is RY.

The protein belongs to the MnmA/TRMU family.

It localises to the cytoplasm. It carries out the reaction S-sulfanyl-L-cysteinyl-[protein] + uridine(34) in tRNA + AH2 + ATP = 2-thiouridine(34) in tRNA + L-cysteinyl-[protein] + A + AMP + diphosphate + H(+). Functionally, catalyzes the 2-thiolation of uridine at the wobble position (U34) of tRNA, leading to the formation of s(2)U34. The chain is tRNA-specific 2-thiouridylase MnmA from Paraburkholderia phymatum (strain DSM 17167 / CIP 108236 / LMG 21445 / STM815) (Burkholderia phymatum).